Here is a 481-residue protein sequence, read N- to C-terminus: Glycosyl hydrolase family 109 protein 1 (481 aa).

The tat-type signal signal peptide spans 1 to 29 (MDNSSSRRRFLQTLGLATGALAAGSFANA). NAD(+) contacts are provided by residues 84 to 85 (ER), D106, 155 to 158 (WEWH), 175 to 176 (EV), and N204. Substrate-binding positions include Y233, R252, 264-267 (YPTH), and Y347. An NAD(+)-binding site is contributed by Y264.

The protein belongs to the Gfo/Idh/MocA family. Glycosyl hydrolase 109 subfamily. It depends on NAD(+) as a cofactor. Predicted to be exported by the Tat system. The position of the signal peptide cleavage has not been experimentally proven.

In terms of biological role, glycosidase. The chain is Glycosyl hydrolase family 109 protein 1 from Akkermansia muciniphila (strain ATCC BAA-835 / DSM 22959 / JCM 33894 / BCRC 81048 / CCUG 64013 / CIP 107961 / Muc).